The sequence spans 233 residues: MARKVVVVDDEKPIADILEFNLKKEGYDVYCAYDGNDAVDLIYEEEPDIVLLDIMLPGRDGMEVCREVRKKYEMPIIMLTAKDSEIDKVLGLELGADDYVTKPFSTRELIARVKANLRRHYSQPAQDTGNVTNEITIKDIVIYPDAYSIKKRGEDIELTHREFELFHYLSKHMGQVMTREHLLQTVWGYDYFGDVRTVDVTIRRLREKIEDDPSHPEYIVTRRGVGYFLQQHE.

One can recognise a Response regulatory domain in the interval 4 to 117 (KVVVVDDEKP…ELIARVKANL (114 aa)). D53 carries the 4-aspartylphosphate modification. T101 bears the Phosphothreonine mark. The ompR/PhoB-type DNA-binding region spans 132-231 (TNEITIKDIV…RRGVGYFLQQ (100 aa)).

In terms of processing, phosphorylated by WalK on Asp-53. Phosphorylated by PknB on Thr-101.

It localises to the cytoplasm. Functionally, member of the two-component regulatory system WalK/WalR that regulates genes involved in cell wall metabolism, virulence regulation, biofilm production, oxidative stress resistance and antibiotic resistance via direct or indirect regulation of autolysins. Functions as a transcription regulator by direct binding to promoter regions. The chain is Transcriptional regulatory protein WalR (walR) from Staphylococcus aureus (strain Mu3 / ATCC 700698).